A 417-amino-acid polypeptide reads, in one-letter code: Tol-Pal system protein TolB (417 aa).

The first 16 residues, 1–16 (MKYLWLFLIYAIGLFA), serve as a signal peptide directing secretion.

Belongs to the TolB family. As to quaternary structure, the Tol-Pal system is composed of five core proteins: the inner membrane proteins TolA, TolQ and TolR, the periplasmic protein TolB and the outer membrane protein Pal. They form a network linking the inner and outer membranes and the peptidoglycan layer.

The protein resides in the periplasm. In terms of biological role, part of the Tol-Pal system, which plays a role in outer membrane invagination during cell division and is important for maintaining outer membrane integrity. The polypeptide is Tol-Pal system protein TolB (Helicobacter pylori (strain J99 / ATCC 700824) (Campylobacter pylori J99)).